A 388-amino-acid chain; its full sequence is S-adenosylmethionine synthase (388 aa).

His-17 is an ATP binding site. Residue Asp-19 participates in Mg(2+) binding. Glu-45 contributes to the K(+) binding site. 2 residues coordinate L-methionine: Glu-58 and Gln-106. The interval 106 to 116 is flexible loop; that stretch reads QSAHISQGVDR. ATP-binding positions include 166–168, Asp-241, 247–248, Ala-264, and Lys-268; these read DAK and RK. Asp-241 is an L-methionine binding site. Lys-272 serves as a coordination point for L-methionine.

This sequence belongs to the AdoMet synthase family. In terms of assembly, homotetramer; dimer of dimers. Requires Mg(2+) as cofactor. The cofactor is K(+).

It localises to the cytoplasm. The enzyme catalyses L-methionine + ATP + H2O = S-adenosyl-L-methionine + phosphate + diphosphate. It participates in amino-acid biosynthesis; S-adenosyl-L-methionine biosynthesis; S-adenosyl-L-methionine from L-methionine: step 1/1. Its function is as follows. Catalyzes the formation of S-adenosylmethionine (AdoMet) from methionine and ATP. The overall synthetic reaction is composed of two sequential steps, AdoMet formation and the subsequent tripolyphosphate hydrolysis which occurs prior to release of AdoMet from the enzyme. In Paracoccus denitrificans (strain Pd 1222), this protein is S-adenosylmethionine synthase.